Reading from the N-terminus, the 294-residue chain is Fructose-bisphosphate aldolase class 1 (294 aa).

Catalysis depends on Glu-176, which acts as the Proton acceptor. Lys-213 (schiff-base intermediate with dihydroxyacetone-P) is an active-site residue.

Belongs to the class I fructose-bisphosphate aldolase family.

The catalysed reaction is beta-D-fructose 1,6-bisphosphate = D-glyceraldehyde 3-phosphate + dihydroxyacetone phosphate. The protein operates within carbohydrate degradation; glycolysis; D-glyceraldehyde 3-phosphate and glycerone phosphate from D-glucose: step 4/4. This chain is Fructose-bisphosphate aldolase class 1, found in Oceanobacillus iheyensis (strain DSM 14371 / CIP 107618 / JCM 11309 / KCTC 3954 / HTE831).